We begin with the raw amino-acid sequence, 149 residues long: Cytochrome c-type biogenesis protein CcmE (149 aa).

At 1–7 (MTRKQKR) the chain is on the cytoplasmic side. The helical; Signal-anchor for type II membrane protein transmembrane segment at 8 to 28 (LAVIAGGVGFIMVAVLLVLFA) threads the bilayer. The Periplasmic segment spans residues 29–149 (FGQSIAYFYM…GVWKGEGEAK (121 aa)). Heme contacts are provided by histidine 123 and tyrosine 127.

Belongs to the CcmE/CycJ family.

It is found in the cell inner membrane. In terms of biological role, heme chaperone required for the biogenesis of c-type cytochromes. Transiently binds heme delivered by CcmC and transfers the heme to apo-cytochromes in a process facilitated by CcmF and CcmH. In Allorhizobium ampelinum (strain ATCC BAA-846 / DSM 112012 / S4) (Agrobacterium vitis (strain S4)), this protein is Cytochrome c-type biogenesis protein CcmE.